The following is a 1485-amino-acid chain: Dicer-like protein 2 (1485 aa).

Over residues 1–11 the composition is skewed to low complexity; that stretch reads MSSQDESASSS. Positions 1–61 are disordered; it reads MSSQDESASS…EPQPSGNGPR (61 aa). The Helicase ATP-binding domain maps to 72–250; sequence MFQASMQQNI…MEDLESSLDS (179 aa). 85-92 contributes to the ATP binding site; sequence MDTGSGKT. The DEAH box signature appears at 193–196; that stretch reads DEAH. Positions 415–579 constitute a Helicase C-terminal domain; that stretch reads KLQVLLRILR…RYENDMRELD (165 aa). Residues 609–712 enclose the Dicer dsRNA-binding fold domain; sequence AKGHLEHFCR…LPIRESDFVD (104 aa). RNase III domains lie at 988–1127 and 1168–1358; these read AQEL…IEGG and LGPL…VDSG. E1208, D1344, and E1347 together coordinate Mg(2+). The region spanning 1388–1469 is the DRBM domain; that stretch reads HPKEELGRVA…ALEVIRVWEE (82 aa).

Belongs to the helicase family. Dicer subfamily. Requires Mg(2+) as cofactor. The cofactor is Mn(2+).

Dicer-like endonuclease involved in cleaving double-stranded RNA in the RNA interference (RNAi) pathway. Produces 21 to 25 bp dsRNAs (siRNAs) which target the selective destruction of homologous RNAs leading to sequence-specific suppression of gene expression, called post-transcriptional gene silencing (PTGS). Part of a broad host defense response against viral infection and transposons. This is Dicer-like protein 2 (DCL2) from Pyricularia oryzae (strain 70-15 / ATCC MYA-4617 / FGSC 8958) (Rice blast fungus).